The following is a 333-amino-acid chain: Transcription termination factor MTERF6, chloroplastic/mitochondrial (333 aa).

It belongs to the mTERF family.

Its subcellular location is the plastid. The protein resides in the chloroplast. It is found in the mitochondrion. In terms of biological role, transcription termination factor essential for chloroplast development. Required for maturation of 16S rRNA, 18S rRNA and 23S rRNA in the chloroplast. Binds to a specific region within the tRNA(Ile)(GAU) gene at a position adjacent to and downstream of the 16S rRNA gene. Required for the maturation of tRNA(Ile)(GAU). Binds to double-stranded DNA. The chain is Transcription termination factor MTERF6, chloroplastic/mitochondrial from Arabidopsis thaliana (Mouse-ear cress).